The primary structure comprises 710 residues: Ephexin-1 (710 aa).

2 stretches are compositionally biased toward basic and acidic residues: residues 1-11 (METRESEDLEK) and 26-41 (EPAK…KEET). The disordered stretch occupies residues 1-143 (METRESEDLE…PGNGATPEEW (143 aa)). Residues 1–273 (METRESEDLE…LEILQPEEIK (273 aa)) form a regulatory region; modulates activity toward RHOA, RAC1 and CDC42 region. Polar residues-rich tracts occupy residues 89 to 102 (ADSQ…NEPL) and 127 to 136 (MSESSSTPGN). Y179 is modified (phosphotyrosine). Residues 194-236 (RRQQDAEIEDNTNGSPASEDTPEEEEEEEEEEEPASPPERKTL) form a disordered region. The span at 213 to 227 (DTPEEEEEEEEEEEP) shows a compositional bias: acidic residues. The DH domain maps to 273 to 457 (KLQEAMFELV…EMVVKACNEG (185 aa)). Residues 489–601 (WLLKQGELQQ…WMTSLAPNRR (113 aa)) form the PH domain. Residues 612-673 (LDCPQVQCVH…PSSMTEEILN (62 aa)) form the SH3 domain. Residues 687–699 (VHKMDDPQRSQNK) show a composition bias toward basic and acidic residues. Positions 687-710 (VHKMDDPQRSQNKDRRKLGSRNRQ) are disordered. Positions 700–710 (DRRKLGSRNRQ) are enriched in basic residues.

Interacts with CDK5R1 and EPHA4; activated by EPHA4 through the CDK5 kinase. In terms of processing, src-dependent phosphorylation at Tyr-179 upon EPHA4 activation increases the guanine exchange factor activity toward RHOA. Phosphorylation by CDK5 upon EPHA4 activation by EFNA1 may regulate dendritic spine morphogenesis. As to expression, highly expressed in brain specifically in caudate nucleus and to a lower extent in amygdala and hippocampus. Also detected in lung.

The protein resides in the cytoplasm. It is found in the membrane. The protein localises to the cell projection. Its subcellular location is the growth cone. Functionally, acts as a guanine nucleotide exchange factor (GEF) which differentially activates the GTPases RHOA, RAC1 and CDC42. Plays a role in axon guidance regulating ephrin-induced growth cone collapse and dendritic spine morphogenesis. Upon activation by ephrin through EPHA4, the GEF activity switches toward RHOA resulting in its activation. Activated RHOA promotes cone retraction at the expense of RAC1- and CDC42-stimulated growth cone extension. This chain is Ephexin-1 (NGEF), found in Homo sapiens (Human).